Reading from the N-terminus, the 170-residue chain is Probable chemoreceptor glutamine deamidase CheD (170 aa).

The protein belongs to the CheD family.

It catalyses the reaction L-glutaminyl-[protein] + H2O = L-glutamyl-[protein] + NH4(+). In terms of biological role, probably deamidates glutamine residues to glutamate on methyl-accepting chemotaxis receptors (MCPs), playing an important role in chemotaxis. The sequence is that of Probable chemoreceptor glutamine deamidase CheD from Maridesulfovibrio salexigens (strain ATCC 14822 / DSM 2638 / NCIMB 8403 / VKM B-1763) (Desulfovibrio salexigens).